Reading from the N-terminus, the 439-residue chain is Phenylacetate-coenzyme A ligase (439 aa).

Belongs to the phenylacetyl-CoA ligase family. Monomer.

It catalyses the reaction 2-phenylacetate + ATP + CoA = phenylacetyl-CoA + AMP + diphosphate. The protein operates within aromatic compound metabolism; phenylacetate degradation. Its activity is regulated as follows. Inhibited by divalent cations (zinc, copper, mercury) and by the sulfhydryl reagents 5,5-dithiobis(2-nitrobenzoic acid), N-ethylmaleimide and p-chloromercuribenzoate. Its function is as follows. Catalyzes the activation of phenylacetic acid (PA) to phenylacetyl-CoA (PA-CoA). Involved in the phenylalanine metabolism. Can also use CTP and UTP as substrate. This is Phenylacetate-coenzyme A ligase (paaK) from Pseudomonas putida (Arthrobacter siderocapsulatus).